The chain runs to 179 residues: Translation initiation factor IF-3 (179 aa).

Belongs to the IF-3 family. In terms of assembly, monomer.

The protein resides in the cytoplasm. Its function is as follows. IF-3 binds to the 30S ribosomal subunit and shifts the equilibrium between 70S ribosomes and their 50S and 30S subunits in favor of the free subunits, thus enhancing the availability of 30S subunits on which protein synthesis initiation begins. In Leptospira interrogans serogroup Icterohaemorrhagiae serovar copenhageni (strain Fiocruz L1-130), this protein is Translation initiation factor IF-3.